The sequence spans 407 residues: Phosphopentomutase (407 aa).

Aspartate 10, aspartate 306, histidine 311, aspartate 347, histidine 348, and histidine 359 together coordinate Mn(2+).

Belongs to the phosphopentomutase family. It depends on Mn(2+) as a cofactor.

It is found in the cytoplasm. The catalysed reaction is 2-deoxy-alpha-D-ribose 1-phosphate = 2-deoxy-D-ribose 5-phosphate. It catalyses the reaction alpha-D-ribose 1-phosphate = D-ribose 5-phosphate. Its pathway is carbohydrate degradation; 2-deoxy-D-ribose 1-phosphate degradation; D-glyceraldehyde 3-phosphate and acetaldehyde from 2-deoxy-alpha-D-ribose 1-phosphate: step 1/2. Functionally, isomerase that catalyzes the conversion of deoxy-ribose 1-phosphate (dRib-1-P) and ribose 1-phosphate (Rib-1-P) to deoxy-ribose 5-phosphate (dRib-5-P) and ribose 5-phosphate (Rib-5-P), respectively. The protein is Phosphopentomutase of Serratia proteamaculans (strain 568).